The sequence spans 425 residues: Histone-binding protein RBBP7 (425 aa).

7 WD repeats span residues 47 to 122 (QWLP…KINH), 128 to 173 (RARY…LRLR), 181 to 217 (GLSWNSNLSGHLLSASDDHTVCLWDISAGPKEGKVVD), 228 to 269 (VVED…HSVD), 275 to 312 (VNCLSFNPYSEFILATGSADKTVALWDLRNLKLKLHSF), 318 to 369 (EIFQ…LFIH), and 376 to 403 (ISDFSWNPNEPWVICSVSEDNIMQIWQM).

This sequence belongs to the WD repeat RBAP46/RBAP48/MSI1 family. Binds directly to helix 1 of the histone fold of histone H4, a region that is not accessible when H4 is in chromatin.

It is found in the nucleus. Its function is as follows. Core histone-binding subunit that may target chromatin remodeling factors, histone acetyltransferases and histone deacetylases to their histone substrates in a manner that is regulated by nucleosomal DNA. Component of several complexes which regulate chromatin metabolism. The polypeptide is Histone-binding protein RBBP7 (rbbp7) (Xenopus laevis (African clawed frog)).